Consider the following 520-residue polypeptide: GMP synthase [glutamine-hydrolyzing] (520 aa).

Positions 9–202 (TVLIVDFGSQ…VHNIAGIEGD (194 aa)) constitute a Glutamine amidotransferase type-1 domain. Cysteine 86 functions as the Nucleophile in the catalytic mechanism. Catalysis depends on residues histidine 176 and glutamate 178. The 193-residue stretch at 203–395 (WTMRAYREHA…LGLPESFIGR (193 aa)) folds into the GMPS ATP-PPase domain. An ATP-binding site is contributed by 230–236 (SGGVDSS).

Homodimer.

The enzyme catalyses XMP + L-glutamine + ATP + H2O = GMP + L-glutamate + AMP + diphosphate + 2 H(+). The protein operates within purine metabolism; GMP biosynthesis; GMP from XMP (L-Gln route): step 1/1. Functionally, catalyzes the synthesis of GMP from XMP. The protein is GMP synthase [glutamine-hydrolyzing] of Mesorhizobium japonicum (strain LMG 29417 / CECT 9101 / MAFF 303099) (Mesorhizobium loti (strain MAFF 303099)).